Consider the following 185-residue polypeptide: Ribosome-recycling factor (185 aa).

This sequence belongs to the RRF family.

The protein localises to the cytoplasm. In terms of biological role, responsible for the release of ribosomes from messenger RNA at the termination of protein biosynthesis. May increase the efficiency of translation by recycling ribosomes from one round of translation to another. This is Ribosome-recycling factor from Salmonella paratyphi A (strain ATCC 9150 / SARB42).